We begin with the raw amino-acid sequence, 753 residues long: 5-methyltetrahydropteroyltriglutamate--homocysteine methyltransferase (753 aa).

5-methyltetrahydropteroyltri-L-glutamate is bound by residues 17 to 20 (RELK) and Lys117. Residues 431 to 433 (IGS) and Glu484 each bind L-homocysteine. Residues 431 to 433 (IGS) and Glu484 contribute to the L-methionine site. Residues 515-516 (RC) and Trp561 contribute to the 5-methyltetrahydropteroyltri-L-glutamate site. Asp599 provides a ligand contact to L-homocysteine. Asp599 is an L-methionine binding site. Residue Glu605 participates in 5-methyltetrahydropteroyltri-L-glutamate binding. Positions 641, 643, and 665 each coordinate Zn(2+). The Proton donor role is filled by His694. Residue Cys726 participates in Zn(2+) binding.

This sequence belongs to the vitamin-B12 independent methionine synthase family. Zn(2+) is required as a cofactor.

It carries out the reaction 5-methyltetrahydropteroyltri-L-glutamate + L-homocysteine = tetrahydropteroyltri-L-glutamate + L-methionine. The protein operates within amino-acid biosynthesis; L-methionine biosynthesis via de novo pathway; L-methionine from L-homocysteine (MetE route): step 1/1. Catalyzes the transfer of a methyl group from 5-methyltetrahydrofolate to homocysteine resulting in methionine formation. The chain is 5-methyltetrahydropteroyltriglutamate--homocysteine methyltransferase from Shigella sonnei (strain Ss046).